The chain runs to 55 residues: Large ribosomal subunit protein bL33 (55 aa).

It belongs to the bacterial ribosomal protein bL33 family.

The polypeptide is Large ribosomal subunit protein bL33 (Arthrobacter sp. (strain FB24)).